A 250-amino-acid polypeptide reads, in one-letter code: Ribosomal RNA small subunit methyltransferase J (250 aa).

S-adenosyl-L-methionine-binding positions include 101-102 (RD), 117-118 (ER), 153-154 (SS), and Asp-171.

It belongs to the methyltransferase superfamily. RsmJ family.

The protein resides in the cytoplasm. The enzyme catalyses guanosine(1516) in 16S rRNA + S-adenosyl-L-methionine = N(2)-methylguanosine(1516) in 16S rRNA + S-adenosyl-L-homocysteine + H(+). Specifically methylates the guanosine in position 1516 of 16S rRNA. In Shigella boydii serotype 18 (strain CDC 3083-94 / BS512), this protein is Ribosomal RNA small subunit methyltransferase J.